The primary structure comprises 92 residues: MSNRRSRQTSNASRISDDQMIDLVSKLRQFLPEIHERRRSDKVSASKVLQETCNYIRKLHREVDNLSDRLSQLLDSVDEDSPEAAVIRSLLM.

The region spanning 4–59 (RRSRQTSNASRISDDQMIDLVSKLRQFLPEIHERRRSDKVSASKVLQETCNYIRKL) is the bHLH domain.

Belongs to the bHLH protein family. Interacts with IBH1.

It localises to the nucleus. In terms of biological role, atypical and probable non DNA-binding bHLH transcription factor that integrates multiple signaling pathways to regulate cell elongation and plant development. May have a regulatory role in various aspects of gibberellin-dependent growth and development. The chain is Transcription factor PRE5 (PRE5) from Arabidopsis thaliana (Mouse-ear cress).